The chain runs to 198 residues: Peptidyl-tRNA hydrolase (198 aa).

Residue Tyr-15 coordinates tRNA. The active-site Proton acceptor is His-20. Residues Phe-66, Asn-68, and Asn-114 each contribute to the tRNA site.

The protein belongs to the PTH family. As to quaternary structure, monomer.

It is found in the cytoplasm. The catalysed reaction is an N-acyl-L-alpha-aminoacyl-tRNA + H2O = an N-acyl-L-amino acid + a tRNA + H(+). Its function is as follows. Hydrolyzes ribosome-free peptidyl-tRNAs (with 1 or more amino acids incorporated), which drop off the ribosome during protein synthesis, or as a result of ribosome stalling. Functionally, catalyzes the release of premature peptidyl moieties from peptidyl-tRNA molecules trapped in stalled 50S ribosomal subunits, and thus maintains levels of free tRNAs and 50S ribosomes. The chain is Peptidyl-tRNA hydrolase from Cupriavidus metallidurans (strain ATCC 43123 / DSM 2839 / NBRC 102507 / CH34) (Ralstonia metallidurans).